A 367-amino-acid chain; its full sequence is S-adenosylmethionine:tRNA ribosyltransferase-isomerase (367 aa).

The tract at residues 150–182 (RHGEEEESSDEAISSQNPEIATESKRTPSNDDK) is disordered. The segment covering 171–182 (TESKRTPSNDDK) has biased composition (basic and acidic residues).

The protein belongs to the QueA family. In terms of assembly, monomer.

Its subcellular location is the cytoplasm. The enzyme catalyses 7-aminomethyl-7-carbaguanosine(34) in tRNA + S-adenosyl-L-methionine = epoxyqueuosine(34) in tRNA + adenine + L-methionine + 2 H(+). It participates in tRNA modification; tRNA-queuosine biosynthesis. Its function is as follows. Transfers and isomerizes the ribose moiety from AdoMet to the 7-aminomethyl group of 7-deazaguanine (preQ1-tRNA) to give epoxyqueuosine (oQ-tRNA). This Rickettsia felis (strain ATCC VR-1525 / URRWXCal2) (Rickettsia azadi) protein is S-adenosylmethionine:tRNA ribosyltransferase-isomerase.